The sequence spans 351 residues: MTIAAGRMPQRGWFDVLDDWLKRDRFVFVGWSGILLLPTAYLSIGGWLTGTTFVTSWYTHGIASSYLEGCNFLTAAVSTPADAMGHSLLLLWGPEAQGDFVRWCQLGGLWAFVALHGAFALIGFMLRQFEIARLVGIRPYNAIAFSGPIAVFVSVFLMYPLGQSSWFFAPSFGVAAIFRFLLFLQGFHNWTLNPFHMMGVAGILGGALLCAIHGATVENTLFEDGEQSNTFKAFEPTQEEETYSMVTANRFWSQIFGIAFSNKRWLHFFMLFVPVMGLWTSAIGIIGLALNLRAYDFVSQEIRAAEDPEFETFYTKNILLNEGLRAWMAPADQPHENFVFPEEVLPRGNAL.

Residues 39 to 59 traverse the membrane as a helical segment; that stretch reads TAYLSIGGWLTGTTFVTSWYT. H116 is a chlorophyll a binding site. A helical transmembrane segment spans residues 123–139; sequence GFMLRQFEIARLVGIRP. The pheophytin a site is built by Q128 and N141. Residues 151-164 traverse the membrane as a helical segment; sequence VFVSVFLMYPLGQS. Residue H196 coordinates chlorophyll a. A helical transmembrane segment spans residues 206-226; sequence GALLCAIHGATVENTLFEDGE. 2 residues coordinate a plastoquinone: H213 and F260. A Fe cation-binding site is contributed by H213. Position 267 (H267) interacts with Fe cation. A helical transmembrane segment spans residues 277-293; the sequence is GLWTSAIGIIGLALNLR.

The protein belongs to the reaction center PufL/M/PsbA/D family. In terms of assembly, PSII is composed of 1 copy each of membrane proteins PsbA, PsbB, PsbC, PsbD, PsbE, PsbF, PsbH, PsbI, PsbJ, PsbK, PsbL, PsbM, PsbT, PsbX, PsbY, PsbZ, Psb30/Ycf12, peripheral proteins PsbO, CyanoQ (PsbQ), PsbU, PsbV and a large number of cofactors. It forms dimeric complexes. The D1/D2 heterodimer binds P680, chlorophylls that are the primary electron donor of PSII, and subsequent electron acceptors. It shares a non-heme iron and each subunit binds pheophytin, quinone, additional chlorophylls, carotenoids and lipids. There is also a Cl(-1) ion associated with D1 and D2, which is required for oxygen evolution. The PSII complex binds additional chlorophylls, carotenoids and specific lipids. is required as a cofactor.

It localises to the cellular thylakoid membrane. The enzyme catalyses 2 a plastoquinone + 4 hnu + 2 H2O = 2 a plastoquinol + O2. Its function is as follows. Photosystem II (PSII) is a light-driven water:plastoquinone oxidoreductase that uses light energy to abstract electrons from H(2)O, generating O(2) and a proton gradient subsequently used for ATP formation. It consists of a core antenna complex that captures photons, and an electron transfer chain that converts photonic excitation into a charge separation. The D1/D2 (PsbA/PsbD) reaction center heterodimer binds P680, the primary electron donor of PSII as well as several subsequent electron acceptors. D2 is needed for assembly of a stable PSII complex. The sequence is that of Photosystem II D2 protein from Synechococcus sp. (strain CC9311).